The sequence spans 423 residues: Histidine--tRNA ligase (423 aa).

The protein belongs to the class-II aminoacyl-tRNA synthetase family. In terms of assembly, homodimer.

Its subcellular location is the cytoplasm. It carries out the reaction tRNA(His) + L-histidine + ATP = L-histidyl-tRNA(His) + AMP + diphosphate + H(+). The polypeptide is Histidine--tRNA ligase (Phytoplasma mali (strain AT)).